A 340-amino-acid chain; its full sequence is Mitochondrial import receptor subunit TOM40 homolog 2 (340 aa).

The disordered stretch occupies residues 1–37; sequence MGNVMASTADAESSRGRGHLSAGLRLPEAPQYSGGVP.

The protein belongs to the Tom40 family. As to quaternary structure, forms part of the preprotein translocase of the outer mitochondrial membrane (TOM complex). Interacts with mitochondrial targeting sequences. In terms of tissue distribution, only expressed in the male germline, detected in primary spermatocytes as well as post-meiotic stages. Not detected in stem cells and spermatogonia near the tip of the testis.

The protein localises to the mitochondrion outer membrane. In terms of biological role, channel-forming protein essential for import of protein precursors into mitochondria. In Drosophila melanogaster (Fruit fly), this protein is Mitochondrial import receptor subunit TOM40 homolog 2.